Consider the following 798-residue polypeptide: Peregrinol diphosphate synthase TPS1, chloroplastic (798 aa).

Residues 1–25 (MASLSTPNINNTTFVNSKTQLPAVK) constitute a chloroplast transit peptide. Lys-243 contacts substrate. Residues Asp-377 and Asp-379 each coordinate Mg(2+). Positions 377–380 (DLDD) match the DXDD motif motif. A substrate-binding site is contributed by Lys-463.

It belongs to the terpene synthase family. It depends on Mg(2+) as a cofactor. As to expression, mostly expressed in trichomes of leaves and fruits.

Its subcellular location is the plastid. It is found in the chloroplast. The enzyme catalyses peregrinol diphosphate = (2E,6E,10E)-geranylgeranyl diphosphate + H2O. The protein operates within secondary metabolite biosynthesis; terpenoid biosynthesis. Functionally, involved in the biosynthesis of labdane-type diterpenoid including cleroda-dienols, and peregrinol lactones and furan derivatives, dopaminergic diterpenoids that can bind to dopamine receptors in the human pituitary gland, have probably ability to lower prolactin levels, and are used to treat menstrual cycle disorders (e.g. premenstrual syndrome and mastodynia). Terpene synthase that produces peregrinol diphosphate from geranylgeranyl diphosphate (GGPP). The chain is Peregrinol diphosphate synthase TPS1, chloroplastic from Vitex agnus-castus (Chaste tree).